The following is a 685-amino-acid chain: UvrABC system protein B (685 aa).

One can recognise a Helicase ATP-binding domain in the interval 39-420 (EGIGDGLMYQ…TYEAEHQGQV (382 aa)). An ATP-binding site is contributed by 52 to 59 (GVTGSGKT). The short motif at 105–128 (YYDYYQPEAYVPSRDLFIEKDSSI) is the Beta-hairpin element. Residues 443–596 (QVDDLLSEAK…QIAFNQANGI (154 aa)) form the Helicase C-terminal domain. The UVR domain occupies 640–675 (AKSIRKLEKEMQEHARNLEFEKAAAARDELFRLRQR).

It belongs to the UvrB family. In terms of assembly, forms a heterotetramer with UvrA during the search for lesions. Interacts with UvrC in an incision complex.

The protein localises to the cytoplasm. Functionally, the UvrABC repair system catalyzes the recognition and processing of DNA lesions. A damage recognition complex composed of 2 UvrA and 2 UvrB subunits scans DNA for abnormalities. Upon binding of the UvrA(2)B(2) complex to a putative damaged site, the DNA wraps around one UvrB monomer. DNA wrap is dependent on ATP binding by UvrB and probably causes local melting of the DNA helix, facilitating insertion of UvrB beta-hairpin between the DNA strands. Then UvrB probes one DNA strand for the presence of a lesion. If a lesion is found the UvrA subunits dissociate and the UvrB-DNA preincision complex is formed. This complex is subsequently bound by UvrC and the second UvrB is released. If no lesion is found, the DNA wraps around the other UvrB subunit that will check the other stand for damage. The sequence is that of UvrABC system protein B from Aromatoleum aromaticum (strain DSM 19018 / LMG 30748 / EbN1) (Azoarcus sp. (strain EbN1)).